Reading from the N-terminus, the 43-residue chain is Photosystem II reaction center protein Psb30 (43 aa).

The chain crosses the membrane as a helical span at residues I16–L36.

The protein belongs to the Psb30/Ycf12 family. In terms of assembly, PSII is composed of 1 copy each of membrane proteins PsbA, PsbB, PsbC, PsbD, PsbE, PsbF, PsbH, PsbI, PsbJ, PsbK, PsbL, PsbM, PsbT, PsbX, PsbY, PsbZ, Psb30/Ycf12, peripheral proteins PsbO, CyanoQ (PsbQ), PsbU, PsbV and a large number of cofactors. It forms dimeric complexes.

The protein localises to the cellular thylakoid membrane. In terms of biological role, a core subunit of photosystem II (PSII), probably helps stabilize the reaction center. This chain is Photosystem II reaction center protein Psb30, found in Trichodesmium erythraeum (strain IMS101).